Reading from the N-terminus, the 306-residue chain is MRVVFMGTPEFSVPILTAIIGHGYEVVAAYTQPPRPAGRRGLELTKSPVHEKAEQFGIPVFTPKSLKGAEEQDVFASLEADVAIVVAYGLLLPQAILDAPRLGCYNGHASLLPRWRGAAPIQRAIMAGDSETGMMIMKMDAGLDTGPVAMAEKVAITPDMTAGELHDRLSMIGADLMIRALGALERESLALQPQAEEGVTYAAKIDKAEARIDWSKPAQDVHNTIRGLSPFPGAWCEMEINGAVERVKLQRSALGEGSGEPGTVLDDRLTVACGEGAVRLVTLQRSGGKPLPAQEFLRGAQVSKVL.

Residue 110–113 participates in (6S)-5,6,7,8-tetrahydrofolate binding; that stretch reads SLLP.

The protein belongs to the Fmt family.

It catalyses the reaction L-methionyl-tRNA(fMet) + (6R)-10-formyltetrahydrofolate = N-formyl-L-methionyl-tRNA(fMet) + (6S)-5,6,7,8-tetrahydrofolate + H(+). Functionally, attaches a formyl group to the free amino group of methionyl-tRNA(fMet). The formyl group appears to play a dual role in the initiator identity of N-formylmethionyl-tRNA by promoting its recognition by IF2 and preventing the misappropriation of this tRNA by the elongation apparatus. This is Methionyl-tRNA formyltransferase from Brucella anthropi (strain ATCC 49188 / DSM 6882 / CCUG 24695 / JCM 21032 / LMG 3331 / NBRC 15819 / NCTC 12168 / Alc 37) (Ochrobactrum anthropi).